We begin with the raw amino-acid sequence, 529 residues long: Peptide chain release factor 3 (529 aa).

In terms of domain architecture, tr-type G spans 11 to 280 (SKRRTFAIIS…GLTDWAPAPL (270 aa)). GTP is bound by residues 20–27 (SHPDAGKT), 88–92 (DTPGH), and 142–145 (NKLD).

Belongs to the TRAFAC class translation factor GTPase superfamily. Classic translation factor GTPase family. PrfC subfamily.

The protein localises to the cytoplasm. Functionally, increases the formation of ribosomal termination complexes and stimulates activities of RF-1 and RF-2. It binds guanine nucleotides and has strong preference for UGA stop codons. It may interact directly with the ribosome. The stimulation of RF-1 and RF-2 is significantly reduced by GTP and GDP, but not by GMP. The protein is Peptide chain release factor 3 of Vibrio vulnificus (strain CMCP6).